An 87-amino-acid polypeptide reads, in one-letter code: uncharacterized protein (87 aa).

The signal sequence occupies residues 1 to 19 (MLVLLVAVLVTAVYAFVHA). The helical transmembrane segment at 39 to 59 (LVILGAAVALASILYPVLGVL) threads the bilayer.

The protein to M.leprae ML2453.

It localises to the membrane. This is an uncharacterized protein from Mycobacterium bovis (strain ATCC BAA-935 / AF2122/97).